The chain runs to 112 residues: UPF0122 protein CPR_1686 (112 aa).

It belongs to the UPF0122 family.

Functionally, might take part in the signal recognition particle (SRP) pathway. This is inferred from the conservation of its genetic proximity to ftsY/ffh. May be a regulatory protein. In Clostridium perfringens (strain SM101 / Type A), this protein is UPF0122 protein CPR_1686.